A 197-amino-acid chain; its full sequence is Dephospho-CoA kinase (197 aa).

A DPCK domain is found at 4-197 (LIGLTGGIAT…VLKWLKTITK (194 aa)). Position 12–17 (12–17 (ATGKST)) interacts with ATP.

The protein belongs to the CoaE family.

The protein localises to the cytoplasm. The enzyme catalyses 3'-dephospho-CoA + ATP = ADP + CoA + H(+). Its pathway is cofactor biosynthesis; coenzyme A biosynthesis; CoA from (R)-pantothenate: step 5/5. Its function is as follows. Catalyzes the phosphorylation of the 3'-hydroxyl group of dephosphocoenzyme A to form coenzyme A. The polypeptide is Dephospho-CoA kinase (Lactiplantibacillus plantarum (strain ATCC BAA-793 / NCIMB 8826 / WCFS1) (Lactobacillus plantarum)).